We begin with the raw amino-acid sequence, 163 residues long: Putative defense protein 3 (163 aa).

Positions 1 to 18 (MMFAYIVAVVSALALTSA) are cleaved as a signal peptide. The Reelin domain maps to 19 to 163 (YPTGAPSSTC…SAPVTVLSHK (145 aa)). Cys28 and Cys103 are oxidised to a cystine.

It belongs to the insect defense protein family.

Its subcellular location is the secreted. In terms of biological role, may have antimicrobial activity. This chain is Putative defense protein 3, found in Antheraea mylitta (Tasar silkworm).